A 258-amino-acid polypeptide reads, in one-letter code: Tryptophan synthase alpha chain (258 aa).

Active-site proton acceptor residues include Glu-50 and Asp-61.

Belongs to the TrpA family. As to quaternary structure, tetramer of two alpha and two beta chains.

It catalyses the reaction (1S,2R)-1-C-(indol-3-yl)glycerol 3-phosphate + L-serine = D-glyceraldehyde 3-phosphate + L-tryptophan + H2O. The protein operates within amino-acid biosynthesis; L-tryptophan biosynthesis; L-tryptophan from chorismate: step 5/5. In terms of biological role, the alpha subunit is responsible for the aldol cleavage of indoleglycerol phosphate to indole and glyceraldehyde 3-phosphate. This chain is Tryptophan synthase alpha chain, found in Clostridium beijerinckii (strain ATCC 51743 / NCIMB 8052) (Clostridium acetobutylicum).